A 127-amino-acid polypeptide reads, in one-letter code: Holo-[acyl-carrier-protein] synthase (127 aa).

Mg(2+)-binding residues include aspartate 9 and glutamate 58.

The protein belongs to the P-Pant transferase superfamily. AcpS family. It depends on Mg(2+) as a cofactor.

It localises to the cytoplasm. It carries out the reaction apo-[ACP] + CoA = holo-[ACP] + adenosine 3',5'-bisphosphate + H(+). In terms of biological role, transfers the 4'-phosphopantetheine moiety from coenzyme A to a Ser of acyl-carrier-protein. The protein is Holo-[acyl-carrier-protein] synthase of Shewanella sp. (strain ANA-3).